Consider the following 492-residue polypeptide: GTPase Der (492 aa).

Residues 3–166 (PVIALVGRPN…AVLGIFPKDA (164 aa)) form the EngA-type G 1 domain. GTP is bound by residues 9-16 (GRPNVGKS), 56-60 (DTGGI), and 118-121 (NKVD). The disordered stretch occupies residues 166–190 (AGEPEEGAEAEEEVQEGQEAKRIPG). Positions 168–181 (EPEEGAEAEEEVQE) are enriched in acidic residues. An EngA-type G 2 domain is found at 197 to 370 (IKLAIIGRPN…SVQAAFHSAV (174 aa)). GTP is bound by residues 203-210 (GRPNVGKS), 250-254 (DTAGV), and 315-318 (NKWD). Residues 371–455 (TRWPTSRLTQ…PIRIEYKGGE (85 aa)) enclose the KH-like domain. A disordered region spans residues 453-492 (GGENPYEGNKNKLTDRQVNKKRRLMSHHKKAEKKRKDKRK). Residues 461–470 (NKNKLTDRQV) are compositionally biased toward basic and acidic residues. The segment covering 471-492 (NKKRRLMSHHKKAEKKRKDKRK) has biased composition (basic residues).

Belongs to the TRAFAC class TrmE-Era-EngA-EngB-Septin-like GTPase superfamily. EngA (Der) GTPase family. Associates with the 50S ribosomal subunit.

GTPase that plays an essential role in the late steps of ribosome biogenesis. The protein is GTPase Der of Ectopseudomonas mendocina (strain ymp) (Pseudomonas mendocina).